We begin with the raw amino-acid sequence, 207 residues long: Large ribosomal subunit protein uL4 (207 aa).

A disordered region spans residues 56-77; the sequence is FVSGGGKKPWRQKGTGRARHGS. Residues 63–77 show a composition bias toward basic residues; sequence KPWRQKGTGRARHGS.

This sequence belongs to the universal ribosomal protein uL4 family. As to quaternary structure, part of the 50S ribosomal subunit.

Functionally, one of the primary rRNA binding proteins, this protein initially binds near the 5'-end of the 23S rRNA. It is important during the early stages of 50S assembly. It makes multiple contacts with different domains of the 23S rRNA in the assembled 50S subunit and ribosome. Forms part of the polypeptide exit tunnel. This is Large ribosomal subunit protein uL4 from Phytoplasma australiense.